A 290-amino-acid polypeptide reads, in one-letter code: UPF0761 membrane protein YihY (290 aa).

A run of 6 helical transmembrane segments spans residues 44–64 (LLSL…FPMF), 104–124 (VGAC…DSAL), 140–160 (FAVY…SLAI), 183–203 (IFPL…VPTI), 210–230 (AIVG…GFAL), and 244–264 (VLAV…IVLL).

This sequence belongs to the UPF0761 family.

It is found in the cell inner membrane. The chain is UPF0761 membrane protein YihY from Escherichia coli O139:H28 (strain E24377A / ETEC).